The primary structure comprises 414 residues: Eukaryotic initiation factor 4A-1 (414 aa).

The Q motif motif lies at 41–69 (ESFDDMGLQENLLRGIYAYGFEKPSAIQQ). Residues 72–242 (IVPFCKGLDV…RKFMNKPVRI (171 aa)) form the Helicase ATP-binding domain. 85–92 (AQSGTGKT) provides a ligand contact to ATP. A DEAD box motif is present at residues 190–193 (DEAD). Positions 253–414 (GIKQFYVNVE…ELPANVADLL (162 aa)) constitute a Helicase C-terminal domain.

The protein belongs to the DEAD box helicase family. eIF4A subfamily. As to quaternary structure, eIF4F is a multi-subunit complex, the composition of which varies with external and internal environmental conditions. It is composed of at least EIF4A, EIF4E and EIF4G.

The catalysed reaction is ATP + H2O = ADP + phosphate + H(+). Its function is as follows. ATP-dependent RNA helicase which is a subunit of the eIF4F complex involved in cap recognition and is required for mRNA binding to ribosome. In the current model of translation initiation, eIF4A unwinds RNA secondary structures in the 5'-UTR of mRNAs which is necessary to allow efficient binding of the small ribosomal subunit, and subsequent scanning for the initiator codon. The polypeptide is Eukaryotic initiation factor 4A-1 (Oryza sativa subsp. japonica (Rice)).